A 446-amino-acid chain; its full sequence is Tubulin beta-5 chain (446 aa).

The MREI motif signature appears at 1 to 4; the sequence is MREI. GTP is bound by residues Gln-11, Glu-69, Ser-138, Gly-142, Thr-143, Gly-144, Asn-204, and Asn-226. A Mg(2+)-binding site is contributed by Glu-69. Glu-438 bears the 5-glutamyl polyglutamate mark.

This sequence belongs to the tubulin family. Dimer of alpha and beta chains. A typical microtubule is a hollow water-filled tube with an outer diameter of 25 nm and an inner diameter of 15 nM. Alpha-beta heterodimers associate head-to-tail to form protofilaments running lengthwise along the microtubule wall with the beta-tubulin subunit facing the microtubule plus end conferring a structural polarity. Microtubules usually have 13 protofilaments but different protofilament numbers can be found in some organisms and specialized cells. Mg(2+) serves as cofactor. Some glutamate residues at the C-terminus are polyglycylated, resulting in polyglycine chains on the gamma-carboxyl group. Glycylation is mainly limited to tubulin incorporated into axonemes (cilia and flagella) whereas glutamylation is prevalent in neuronal cells, centrioles, axonemes, and the mitotic spindle. Both modifications can coexist on the same protein on adjacent residues, and lowering polyglycylation levels increases polyglutamylation, and reciprocally. The precise function of polyglycylation is still unclear. Post-translationally, some glutamate residues at the C-terminus are polyglutamylated, resulting in polyglutamate chains on the gamma-carboxyl group. Polyglutamylation plays a key role in microtubule severing by spastin (SPAST). SPAST preferentially recognizes and acts on microtubules decorated with short polyglutamate tails: severing activity by SPAST increases as the number of glutamates per tubulin rises from one to eight, but decreases beyond this glutamylation threshold.

It is found in the cytoplasm. It localises to the cytoskeleton. In terms of biological role, tubulin is the major constituent of microtubules, a cylinder consisting of laterally associated linear protofilaments composed of alpha- and beta-tubulin heterodimers. Microtubules grow by the addition of GTP-tubulin dimers to the microtubule end, where a stabilizing cap forms. Below the cap, tubulin dimers are in GDP-bound state, owing to GTPase activity of alpha-tubulin. In Gallus gallus (Chicken), this protein is Tubulin beta-5 chain.